Here is a 114-residue protein sequence, read N- to C-terminus: Large ribosomal subunit protein bL19 (114 aa).

Belongs to the bacterial ribosomal protein bL19 family.

In terms of biological role, this protein is located at the 30S-50S ribosomal subunit interface and may play a role in the structure and function of the aminoacyl-tRNA binding site. This Clostridium acetobutylicum (strain ATCC 824 / DSM 792 / JCM 1419 / IAM 19013 / LMG 5710 / NBRC 13948 / NRRL B-527 / VKM B-1787 / 2291 / W) protein is Large ribosomal subunit protein bL19.